A 412-amino-acid polypeptide reads, in one-letter code: 2,3-bisphosphoglycerate-independent phosphoglycerate mutase (412 aa).

The protein belongs to the BPG-independent phosphoglycerate mutase family. A-PGAM subfamily.

The enzyme catalyses (2R)-2-phosphoglycerate = (2R)-3-phosphoglycerate. It functions in the pathway carbohydrate degradation; glycolysis; pyruvate from D-glyceraldehyde 3-phosphate: step 3/5. Functionally, catalyzes the interconversion of 2-phosphoglycerate and 3-phosphoglycerate. The protein is 2,3-bisphosphoglycerate-independent phosphoglycerate mutase of Methanobrevibacter smithii (strain ATCC 35061 / DSM 861 / OCM 144 / PS).